The following is a 447-amino-acid chain: N-succinylarginine dihydrolase (447 aa).

Substrate contacts are provided by residues Ala19–Ser28, Asn110, and His137–Arg138. Glu174 is an active-site residue. Arg212 serves as a coordination point for substrate. The active site involves His248. Substrate-binding residues include Asp250 and Asn359. The active-site Nucleophile is the Cys365.

This sequence belongs to the succinylarginine dihydrolase family. As to quaternary structure, homodimer.

It carries out the reaction N(2)-succinyl-L-arginine + 2 H2O + 2 H(+) = N(2)-succinyl-L-ornithine + 2 NH4(+) + CO2. Its pathway is amino-acid degradation; L-arginine degradation via AST pathway; L-glutamate and succinate from L-arginine: step 2/5. Catalyzes the hydrolysis of N(2)-succinylarginine into N(2)-succinylornithine, ammonia and CO(2). The polypeptide is N-succinylarginine dihydrolase (Escherichia fergusonii (strain ATCC 35469 / DSM 13698 / CCUG 18766 / IAM 14443 / JCM 21226 / LMG 7866 / NBRC 102419 / NCTC 12128 / CDC 0568-73)).